We begin with the raw amino-acid sequence, 97 residues long: Large ribosomal subunit protein uL23 (97 aa).

The protein belongs to the universal ribosomal protein uL23 family. In terms of assembly, part of the 50S ribosomal subunit. Contacts protein L29, and trigger factor when it is bound to the ribosome.

Functionally, one of the early assembly proteins it binds 23S rRNA. One of the proteins that surrounds the polypeptide exit tunnel on the outside of the ribosome. Forms the main docking site for trigger factor binding to the ribosome. The protein is Large ribosomal subunit protein uL23 of Anaeromyxobacter sp. (strain Fw109-5).